Reading from the N-terminus, the 246-residue chain is Small ribosomal subunit protein uS2 (246 aa).

This sequence belongs to the universal ribosomal protein uS2 family.

This Saccharophagus degradans (strain 2-40 / ATCC 43961 / DSM 17024) protein is Small ribosomal subunit protein uS2.